We begin with the raw amino-acid sequence, 539 residues long: GMP synthase [glutamine-hydrolyzing] (539 aa).

The region spanning 4 to 203 is the Glutamine amidotransferase type-1 domain; that stretch reads KILILDFGSQ…VHDICGCKSD (200 aa). Cys82 serves as the catalytic Nucleophile. Catalysis depends on residues His177 and Glu179. Residues 204-395 form the GMPS ATP-PPase domain; sequence WNMPDYIAEA…LGLPHDMVYR (192 aa). Residue 231 to 237 coordinates ATP; the sequence is SGGVDSS.

As to quaternary structure, homodimer.

The catalysed reaction is XMP + L-glutamine + ATP + H2O = GMP + L-glutamate + AMP + diphosphate + 2 H(+). It participates in purine metabolism; GMP biosynthesis; GMP from XMP (L-Gln route): step 1/1. Functionally, catalyzes the synthesis of GMP from XMP. The polypeptide is GMP synthase [glutamine-hydrolyzing] (Herminiimonas arsenicoxydans).